Here is a 498-residue protein sequence, read N- to C-terminus: MRTNPTTSSPVVSTLEEKNLGRIAQIIGPVLDVVFPPGKMPNIYNALVVKGRDTVGQQINVTCEVQQLLGNNRVRAVAMSATDGLMRGMEVIDTGAPLSVPVGGATLGRIFNVLGEPVDNLGPVDTRTTSPIHRSAPAFIQLDTKLSIFETGIKVVDLLAPYRRGGKIGLFGGAGVGKTVLIMELINNIAKAHGGVSVFGGVGERTREGNDLYMEMKESGVINEKNIAESKVALVYGQMNEPPGARMRVGLTALTMAEYFRDVNEQDVLLFIDNIFRFVQAGSEVSALLGRMPSAVGYQPTLSTEMGSLQERITSTKEGSITSIQAVYVPADDLTDPAPATTFAHLDATTVLSRVLAAKGIYPAVDPLDSTSTMLQPRIVGEEHYETAQRVKQTSQRYKELQDIIAILGLDELSEEDRLTVARARKIERFLSQPFFVAEVFTGSPGKYVGLAETIRGFQLILSGELDGLPEQAFYLVGNIDEATAKAMNLEVESKLKK.

172 to 179 contributes to the ATP binding site; it reads GGAGVGKT.

This sequence belongs to the ATPase alpha/beta chains family. F-type ATPases have 2 components, CF(1) - the catalytic core - and CF(0) - the membrane proton channel. CF(1) has five subunits: alpha(3), beta(3), gamma(1), delta(1), epsilon(1). CF(0) has four main subunits: a(1), b(1), b'(1) and c(9-12).

The protein localises to the plastid. The protein resides in the chloroplast thylakoid membrane. The enzyme catalyses ATP + H2O + 4 H(+)(in) = ADP + phosphate + 5 H(+)(out). Functionally, produces ATP from ADP in the presence of a proton gradient across the membrane. The catalytic sites are hosted primarily by the beta subunits. This Hyphaene coriacea (Ilala palm) protein is ATP synthase subunit beta, chloroplastic.